A 78-amino-acid polypeptide reads, in one-letter code: Exodeoxyribonuclease 7 small subunit (78 aa).

It belongs to the XseB family. As to quaternary structure, heterooligomer composed of large and small subunits.

It localises to the cytoplasm. The enzyme catalyses Exonucleolytic cleavage in either 5'- to 3'- or 3'- to 5'-direction to yield nucleoside 5'-phosphates.. Bidirectionally degrades single-stranded DNA into large acid-insoluble oligonucleotides, which are then degraded further into small acid-soluble oligonucleotides. This chain is Exodeoxyribonuclease 7 small subunit, found in Psychromonas ingrahamii (strain DSM 17664 / CCUG 51855 / 37).